The sequence spans 510 residues: NAD(P) transhydrogenase subunit alpha (510 aa).

Residues 1–401 (MRIGIPRERL…EEKCTCSPWR (401 aa)) lie on the Cytoplasmic side of the membrane. NAD(+) contacts are provided by residues 120 to 122 (RIS), valine 175, 195 to 197 (DTR), glutamate 238, and leucine 257. A run of 2 helical transmembrane segments spans residues 402–422 (KYAL…VAPK) and 423–443 (EFLG…YVVW). The Cytoplasmic portion of the chain corresponds to 444–452 (NVSHALHTP). The helical transmembrane segment at 453–473 (LMSVTNAISGIIVVGALLQIG) threads the bilayer. The Periplasmic segment spans residues 474 to 476 (QGG). The helical transmembrane segment at 477–497 (WVSFLSFIAVLIASINIFGGF) threads the bilayer. The Cytoplasmic segment spans residues 498 to 510 (TVTQRMLKMFRKN).

This sequence belongs to the AlaDH/PNT family. In terms of assembly, heterodimer of an alpha (PntA) and a beta (PntB) chain. Alpha subunit serves as the dimerization unit.

Its subcellular location is the cell inner membrane. The enzyme catalyses NAD(+) + NADPH + H(+)(in) = NADH + NADP(+) + H(+)(out). Its function is as follows. The transhydrogenation between NADH and NADP is coupled to respiration and ATP hydrolysis and functions as a proton pump across the membrane. This chain is NAD(P) transhydrogenase subunit alpha (pntA), found in Escherichia coli (strain K12).